The following is a 96-amino-acid chain: uncharacterized protein (96 aa).

An N-terminal signal peptide occupies residues 1 to 23; it reads MKQFYSVVLTIIIYISSQSNVVS. Disulfide bonds link cysteine 60-cysteine 74, cysteine 67-cysteine 78, and cysteine 73-cysteine 83.

It localises to the secreted. This is an uncharacterized protein from Schistosoma japonicum (Blood fluke).